The sequence spans 419 residues: Farnesyl pyrophosphate synthase (419 aa).

M1 is modified (N-acetylmethionine). Residues K123, R126, and Q162 each contribute to the isopentenyl diphosphate site. K123 carries the post-translational modification N6-(2-hydroxyisobutyryl)lysine; alternate. N6-acetyllysine; alternate is present on K123. Mg(2+) is bound by residues D169 and D173. Residue R178 coordinates dimethylallyl diphosphate. R179 lines the isopentenyl diphosphate pocket. K266, T267, Q306, K323, and K332 together coordinate dimethylallyl diphosphate. Residue K353 is modified to N6-acetyllysine.

This sequence belongs to the FPP/GGPP synthase family. In terms of assembly, homodimer. Interacts with RSAD2. (Microbial infection) Interacts with HTLV-1 protein p13(II). Requires Mg(2+) as cofactor.

The protein resides in the cytoplasm. The enzyme catalyses isopentenyl diphosphate + dimethylallyl diphosphate = (2E)-geranyl diphosphate + diphosphate. It catalyses the reaction isopentenyl diphosphate + (2E)-geranyl diphosphate = (2E,6E)-farnesyl diphosphate + diphosphate. It functions in the pathway isoprenoid biosynthesis; farnesyl diphosphate biosynthesis; farnesyl diphosphate from geranyl diphosphate and isopentenyl diphosphate: step 1/1. Its pathway is isoprenoid biosynthesis; geranyl diphosphate biosynthesis; geranyl diphosphate from dimethylallyl diphosphate and isopentenyl diphosphate: step 1/1. With respect to regulation, inactivated by interferon-induced RSAD2. This inactivation may result of disruption of lipid rafts at the plasma membrane, and thus have an antiviral effect since many enveloped viruses need lipid rafts to bud efficiently out of the cell. Functionally, key enzyme in isoprenoid biosynthesis which catalyzes the formation of farnesyl diphosphate (FPP), a precursor for several classes of essential metabolites including sterols, dolichols, carotenoids, and ubiquinones. FPP also serves as substrate for protein farnesylation and geranylgeranylation. Catalyzes the sequential condensation of isopentenyl pyrophosphate with the allylic pyrophosphates, dimethylallyl pyrophosphate, and then with the resultant geranylpyrophosphate to the ultimate product farnesyl pyrophosphate. The protein is Farnesyl pyrophosphate synthase of Homo sapiens (Human).